Here is a 356-residue protein sequence, read N- to C-terminus: UDP-N-acetylglucosamine--N-acetylmuramyl-(pentapeptide) pyrophosphoryl-undecaprenol N-acetylglucosamine transferase (356 aa).

UDP-N-acetyl-alpha-D-glucosamine contacts are provided by residues 15–17, asparagine 127, arginine 163, serine 191, isoleucine 244, 263–268, and glutamine 288; these read TGG and ALTVSE.

Belongs to the glycosyltransferase 28 family. MurG subfamily.

It localises to the cell inner membrane. The enzyme catalyses di-trans,octa-cis-undecaprenyl diphospho-N-acetyl-alpha-D-muramoyl-L-alanyl-D-glutamyl-meso-2,6-diaminopimeloyl-D-alanyl-D-alanine + UDP-N-acetyl-alpha-D-glucosamine = di-trans,octa-cis-undecaprenyl diphospho-[N-acetyl-alpha-D-glucosaminyl-(1-&gt;4)]-N-acetyl-alpha-D-muramoyl-L-alanyl-D-glutamyl-meso-2,6-diaminopimeloyl-D-alanyl-D-alanine + UDP + H(+). It functions in the pathway cell wall biogenesis; peptidoglycan biosynthesis. In terms of biological role, cell wall formation. Catalyzes the transfer of a GlcNAc subunit on undecaprenyl-pyrophosphoryl-MurNAc-pentapeptide (lipid intermediate I) to form undecaprenyl-pyrophosphoryl-MurNAc-(pentapeptide)GlcNAc (lipid intermediate II). This is UDP-N-acetylglucosamine--N-acetylmuramyl-(pentapeptide) pyrophosphoryl-undecaprenol N-acetylglucosamine transferase from Yersinia pseudotuberculosis serotype O:1b (strain IP 31758).